Reading from the N-terminus, the 99-residue chain is MSRGGSFGGGQSSLGYLFGSDNEIPKTPAPPVAPKPAPPYGVDSTEEDHEADQKPKISNNNYQRVQGQNSGNFVTDRPTTKVKSVPGGGSSLGYLFGDK.

Over residues 1–12 (MSRGGSFGGGQS) the composition is skewed to gly residues. The disordered stretch occupies residues 1–99 (MSRGGSFGGG…SSLGYLFGDK (99 aa)). Residues 27–39 (TPAPPVAPKPAPP) are compositionally biased toward pro residues. Residues 56 to 73 (KISNNNYQRVQGQNSGNF) are compositionally biased toward polar residues. S58 carries the phosphoserine modification.

The protein belongs to the SPIRAL1 family. Expressed exclusively in stems and flowers.

Acts redundantly with SPR1 in maintaining the cortical microtubules organization essential for anisotropic cell growth. The protein is Protein SPIRAL1-like 5 (SP1L5) of Arabidopsis thaliana (Mouse-ear cress).